Consider the following 379-residue polypeptide: Homoserine O-succinyltransferase (379 aa).

The 310-residue stretch at 51–360 (NAVLICHALS…DAPQGHDAFL (310 aa)) folds into the AB hydrolase-1 domain. S157 functions as the Nucleophile in the catalytic mechanism. Residue R227 coordinates substrate. Active-site residues include D323 and H356. Position 357 (D357) interacts with substrate.

The protein belongs to the AB hydrolase superfamily. MetX family. In terms of assembly, homodimer.

The protein resides in the cytoplasm. The catalysed reaction is L-homoserine + succinyl-CoA = O-succinyl-L-homoserine + CoA. It participates in amino-acid biosynthesis; L-methionine biosynthesis via de novo pathway; O-succinyl-L-homoserine from L-homoserine: step 1/1. Functionally, transfers a succinyl group from succinyl-CoA to L-homoserine, forming succinyl-L-homoserine. In Pseudomonas aeruginosa (strain UCBPP-PA14), this protein is Homoserine O-succinyltransferase.